The primary structure comprises 104 residues: L-rhamnose mutarotase (104 aa).

Tyrosine 18 is a substrate binding site. The Proton donor role is filled by histidine 22. Substrate-binding positions include tyrosine 41 and 76-77 (WW).

Belongs to the rhamnose mutarotase family. Homodimer.

It is found in the cytoplasm. It carries out the reaction alpha-L-rhamnose = beta-L-rhamnose. Its pathway is carbohydrate metabolism; L-rhamnose metabolism. Involved in the anomeric conversion of L-rhamnose. The sequence is that of L-rhamnose mutarotase from Escherichia coli O17:K52:H18 (strain UMN026 / ExPEC).